The following is a 952-amino-acid chain: Lysosomal alpha-glucosidase (952 aa).

Positions 1-27 (MRVRHPPCSRRLLAICALVSLATAALL) are cleaved as a signal peptide. The propeptide occupies 28–69 (GHILLHDFLLVPRELSGSSPVLEETHPAHQQGASRPGPRDAQ). The disordered stretch occupies residues 47-80 (PVLEETHPAHQQGASRPGPRDAQAHLGRPRAVPT). The P-type domain occupies 80 to 131 (TQCDVPPNSRFDCAPDKAITREQCDARGCCYIPAKQGLRGAQMGQPWCFFPP). Intrachain disulfides connect Cys82–Cys109, Cys92–Cys108, and Cys103–Cys127. Asn140, Asn233, and Asn390 each carry an N-linked (GlcNAc...) asparagine glycan. Asp404 contributes to the substrate binding site. Residue Asn470 is glycosylated (N-linked (GlcNAc...) asparagine). The active-site Nucleophile is the Asp518. The active site involves Glu521. Residues Cys533 and Cys558 are joined by a disulfide bond. Arg600 and Asp616 together coordinate substrate. An intrachain disulfide couples Cys647 to Cys658. An N-linked (GlcNAc...) asparagine glycan is attached at Asn652. His674 serves as a coordination point for substrate. 2 N-linked (GlcNAc...) asparagine glycosylation sites follow: Asn882 and Asn925.

Belongs to the glycosyl hydrolase 31 family.

The protein resides in the lysosome. The protein localises to the lysosome membrane. It catalyses the reaction Hydrolysis of terminal, non-reducing (1-&gt;4)-linked alpha-D-glucose residues with release of alpha-D-glucose.. Functionally, essential for the degradation of glycogen in lysosomes. Has highest activity on alpha-1,4-linked glycosidic linkages, but can also hydrolyze alpha-1,6-linked glucans. The chain is Lysosomal alpha-glucosidase (GAA) from Pongo abelii (Sumatran orangutan).